The primary structure comprises 840 residues: Protein translocase subunit SecA (840 aa).

Residues Q87, 105-109 (GEGKT), and D494 contribute to the ATP site. The interval 518–537 (RRIDNQLRGRSGRQGDPGSS) is disordered. The Zn(2+) site is built by C826, C828, C837, and C838.

This sequence belongs to the SecA family. As to quaternary structure, monomer and homodimer. Part of the essential Sec protein translocation apparatus which comprises SecA, SecYEG and auxiliary proteins SecDF-YajC and YidC. The cofactor is Zn(2+).

The protein resides in the cell inner membrane. It localises to the cytoplasm. The catalysed reaction is ATP + H2O + cellular proteinSide 1 = ADP + phosphate + cellular proteinSide 2.. Its function is as follows. Part of the Sec protein translocase complex. Interacts with the SecYEG preprotein conducting channel. Has a central role in coupling the hydrolysis of ATP to the transfer of proteins into and across the cell membrane, serving as an ATP-driven molecular motor driving the stepwise translocation of polypeptide chains across the membrane. This chain is Protein translocase subunit SecA, found in Desulforapulum autotrophicum (strain ATCC 43914 / DSM 3382 / VKM B-1955 / HRM2) (Desulfobacterium autotrophicum).